We begin with the raw amino-acid sequence, 961 residues long: Zinc finger protein basonuclin-1 (961 aa).

The tract at residues 210–219 is hydrophobic; that stretch reads MTFMLPFQFF. 2 consecutive C2H2-type zinc fingers follow at residues 325-348 and 353-382; these read VFCT…NAVH and HKCT…PRLH. The tract at residues 370–393 is disordered; that stretch reads RNRHSANPNPRLHMPMNRNNRDKD. Residues 501 to 507 carry the Nuclear localization signal motif; it reads PKKKSRK. A phosphoserine mark is found at Ser-505 and Ser-509. The interval 523-572 is disordered; it reads EEKRHSLSSDDEVPLQVVSEDEPEDSSPRSDRVPEEQHTQLSLEEPLPQG. Positions 531–547 are enriched in acidic residues; sequence SDDEVPLQVVSEDEPED. Over residues 548 to 560 the composition is skewed to basic and acidic residues; sequence SSPRSDRVPEEQH. 2 consecutive C2H2-type zinc fingers follow at residues 687 to 711 and 715 to 743; these read FQCD…NTHA and HACT…SLHQ. The segment at 810–864 is disordered; that stretch reads ESYNSGPPSEGTILDLSTTSSMKSESSSHSSWDSDGVSEEGTALMEDSDGNCEGQ. Positions 826 to 844 are enriched in low complexity; it reads STTSSMKSESSSHSSWDSD. C2H2-type zinc fingers lie at residues 895–918 and 923–950; these read ITCH…KTVH and HKCK…PNLH. Positions 937-961 are disordered; that stretch reads VRSRNRHSQNPNLHKSLASSPSHLQ.

Interacts with HSF2BP (via C-terminus). Phosphorylation on Ser-505 and Ser-509 leads to cytoplasmic localization. As to expression, epidermis and germ cells of testis and ovary.

The protein localises to the nucleus. Its subcellular location is the cytoplasm. The protein resides in the nucleoplasm. In terms of biological role, transcriptional activator. It is likely involved in the regulation of keratinocytes terminal differentiation in squamous epithelia and hair follicles. Required for the maintenance of spermatogenesis. It is involved in the positive regulation of oocyte maturation, probably acting through the control of BMP15 levels and regulation of AKT signaling cascade. May also play a role in the early development of embryos. This is Zinc finger protein basonuclin-1 (Bnc1) from Mus musculus (Mouse).